We begin with the raw amino-acid sequence, 398 residues long: GTP cyclohydrolase-2 (398 aa).

The interval 1 to 172 (MNTPTHTHPH…TAAACASTTE (172 aa)) is unknown. Residues 173-398 (YELVTRTPVP…VKPIAKTGHA (226 aa)) are GTP cyclohydrolase II. 220–224 (RVHSS) serves as a coordination point for GTP. Zn(2+)-binding residues include Cys225, Cys236, and Cys238. Residues Gln241, 263 to 265 (EGR), and Thr285 each bind GTP. The active-site Proton acceptor is Asp297. Arg299 functions as the Nucleophile in the catalytic mechanism. The GTP site is built by Ser320 and Lys325. The disordered stretch occupies residues 375–398 (QRPQDPSETVDGETVKPIAKTGHA).

This sequence in the C-terminal section; belongs to the GTP cyclohydrolase II family. The cofactor is Zn(2+).

The catalysed reaction is GTP + 4 H2O = 2,5-diamino-6-hydroxy-4-(5-phosphoribosylamino)-pyrimidine + formate + 2 phosphate + 3 H(+). It participates in cofactor biosynthesis; riboflavin biosynthesis; 5-amino-6-(D-ribitylamino)uracil from GTP: step 1/4. Functionally, catalyzes the conversion of GTP to 2,5-diamino-6-ribosylamino-4(3H)-pyrimidinone 5'-phosphate (DARP), formate and pyrophosphate. The polypeptide is GTP cyclohydrolase-2 (ribA) (Xylella fastidiosa (strain Temecula1 / ATCC 700964)).